Consider the following 254-residue polypeptide: Proteasome subunit alpha type-7 (254 aa).

O-linked (GlcNAc) serine glycosylation occurs at Ser136. Phosphotyrosine is present on Tyr159. An N6-acetyllysine modification is found at Lys233.

This sequence belongs to the peptidase T1A family. The 26S proteasome consists of a 20S proteasome core and two 19S regulatory subunits. The 20S proteasome core is a barrel-shaped complex made of 28 subunits that are arranged in four stacked rings. The two outer rings are each formed by seven alpha subunits, and the two inner rings are formed by seven beta subunits. The proteolytic activity is exerted by three beta-subunits PSMB5, PSMB6 and PSMB7. PSMA7 interacts directly with the PSMG1-PSMG2 heterodimer which promotes 20S proteasome assembly. Interacts with HIF1A. Interacts with RAB7A. Interacts with PRKN. Interacts with ABL1 and ABL2. Interacts with EMAP2. Interacts with MAVS. In terms of tissue distribution, ubiquitous.

It is found in the cytoplasm. It localises to the nucleus. Its function is as follows. Component of the 20S core proteasome complex involved in the proteolytic degradation of most intracellular proteins. This complex plays numerous essential roles within the cell by associating with different regulatory particles. Associated with two 19S regulatory particles, forms the 26S proteasome and thus participates in the ATP-dependent degradation of ubiquitinated proteins. The 26S proteasome plays a key role in the maintenance of protein homeostasis by removing misfolded or damaged proteins that could impair cellular functions, and by removing proteins whose functions are no longer required. Associated with the PA200 or PA28, the 20S proteasome mediates ubiquitin-independent protein degradation. This type of proteolysis is required in several pathways including spermatogenesis (20S-PA200 complex) or generation of a subset of MHC class I-presented antigenic peptides (20S-PA28 complex). Inhibits the transactivation function of HIF-1A under both normoxic and hypoxia-mimicking conditions. The interaction with EMAP2 increases the proteasome-mediated HIF-1A degradation under the hypoxic conditions. Plays a role in hepatitis C virus internal ribosome entry site-mediated translation. Mediates nuclear translocation of the androgen receptor (AR) and thereby enhances androgen-mediated transactivation. Promotes MAVS degradation and thereby negatively regulates MAVS-mediated innate immune response. The sequence is that of Proteasome subunit alpha type-7 (Psma7) from Rattus norvegicus (Rat).